Here is a 65-residue protein sequence, read N- to C-terminus: Hainantoxin-X (65 aa).

The N-terminal stretch at 1–20 (MNMKILVLVAVLCLVVSTHA) is a signal peptide. The propeptide occupies 21–37 (ERHSKTDMEDSPMIQER). 3 cysteine pairs are disulfide-bonded: cysteine 39/cysteine 56, cysteine 46/cysteine 59, and cysteine 55/cysteine 64.

It belongs to the neurotoxin 36 family. 02 subfamily. In terms of tissue distribution, expressed by the venom gland.

The protein resides in the secreted. Functionally, reversibly blocks N-type calcium channels (Cav2.2/CACNA1B) in rat dorsal root ganglion cells. Elicits no toxic symptoms in either vertebrates or invertebrates during a period of 48 hours post-injection, when it was assayed in vivo by direct injection into mice and cockroaches. In Cyriopagopus hainanus (Chinese bird spider), this protein is Hainantoxin-X.